We begin with the raw amino-acid sequence, 434 residues long: Alpha-enolase (434 aa).

Ser-2 is subject to N-acetylserine. At Lys-5 the chain carries N6-acetyllysine. Residue Ser-40 participates in Mg(2+) binding. Tyr-44 is modified (phosphotyrosine). An N6-acetyllysine; alternate modification is found at Lys-60. The residue at position 60 (Lys-60) is an N6-succinyllysine; alternate. Lys-64 and Lys-71 each carry N6-acetyllysine. Lys-89 bears the N6-acetyllysine; alternate mark. Residue Lys-89 is modified to N6-succinyllysine; alternate. 2 positions are modified to N6-acetyllysine: Lys-92 and Lys-126. Substrate is bound by residues His-158 and Glu-167. Residues Lys-193 and Lys-199 each carry the N6-acetyllysine modification. Residue Lys-202 is modified to N6-acetyllysine; alternate. Lys-202 participates in a covalent cross-link: Glycyl lysine isopeptide (Lys-Gly) (interchain with G-Cter in SUMO2); alternate. Glu-210 serves as the catalytic Proton donor. N6-acetyllysine; alternate occurs at positions 228 and 233. Lys-228 bears the N6-succinyllysine; alternate mark. Lys-228 carries the N6-(2-hydroxyisobutyryl)lysine; alternate modification. Lys-233 bears the N6-malonyllysine; alternate mark. Position 245 (Asp-245) interacts with Mg(2+). Phosphoserine is present on Ser-254. At Lys-256 the chain carries N6-acetyllysine. Residue Ser-263 is modified to Phosphoserine. Residue Lys-281 is modified to N6-acetyllysine; alternate. Position 281 is an N6-(2-hydroxyisobutyryl)lysine; alternate (Lys-281). Phosphotyrosine is present on Tyr-287. Ser-291 is modified (phosphoserine). Glu-293 and Asp-318 together coordinate Mg(2+). Residues Glu-293 and Asp-318 each contribute to the substrate site. 2 positions are modified to N6-acetyllysine: Lys-335 and Lys-343. The active-site Proton acceptor is the Lys-343. Residues 370-373 and Lys-394 contribute to the substrate site; that span reads SHRS. The interval 405–434 is required for interaction with PLG; that stretch reads AKYNQILRIEEELGSKAKFAGRSFRNPLAK. N6-acetyllysine is present on Lys-406. Lys-420 is subject to N6-acetyllysine; alternate. The residue at position 420 (Lys-420) is an N6-succinyllysine; alternate. The residue at position 420 (Lys-420) is an N6-malonyllysine; alternate.

It belongs to the enolase family. Mammalian enolase is composed of 3 isozyme subunits, alpha, beta and gamma, which can form homodimers or heterodimers which are cell-type and development-specific. ENO1 interacts with PLG in the neuronal plasma membrane and promotes its activation. The C-terminal lysine is required for this binding. Interacts with ENO4 and PGAM2. Interacts with CMTM6. Mg(2+) is required as a cofactor. In terms of processing, ISGylated. Lysine 2-hydroxyisobutyrylation (Khib) by p300/EP300 activates the phosphopyruvate hydratase activity. In terms of tissue distribution, the alpha/alpha homodimer is expressed in embryo and in most adult tissues. The alpha/beta heterodimer and the beta/beta homodimer are found in striated muscle, and the alpha/gamma heterodimer and the gamma/gamma homodimer in neurons.

It is found in the cytoplasm. It localises to the cell membrane. The enzyme catalyses (2R)-2-phosphoglycerate = phosphoenolpyruvate + H2O. It functions in the pathway carbohydrate degradation; glycolysis; pyruvate from D-glyceraldehyde 3-phosphate: step 4/5. Functionally, glycolytic enzyme the catalyzes the conversion of 2-phosphoglycerate to phosphoenolpyruvate. In addition to glycolysis, involved in various processes such as growth control, hypoxia tolerance and allergic responses. May also function in the intravascular and pericellular fibrinolytic system due to its ability to serve as a receptor and activator of plasminogen on the cell surface of several cell-types such as leukocytes and neurons. Stimulates immunoglobulin production. The sequence is that of Alpha-enolase (ENO1) from Bos taurus (Bovine).